A 682-amino-acid polypeptide reads, in one-letter code: Elongation factor G (682 aa).

A tr-type G domain is found at Gln-8–Val-282. GTP contacts are provided by residues Ala-17–Thr-24, Asp-81–His-85, and Asn-135–Asp-138.

Belongs to the TRAFAC class translation factor GTPase superfamily. Classic translation factor GTPase family. EF-G/EF-2 subfamily.

The protein resides in the cytoplasm. Its function is as follows. Catalyzes the GTP-dependent ribosomal translocation step during translation elongation. During this step, the ribosome changes from the pre-translocational (PRE) to the post-translocational (POST) state as the newly formed A-site-bound peptidyl-tRNA and P-site-bound deacylated tRNA move to the P and E sites, respectively. Catalyzes the coordinated movement of the two tRNA molecules, the mRNA and conformational changes in the ribosome. The sequence is that of Elongation factor G from Malacoplasma penetrans (strain HF-2) (Mycoplasma penetrans).